A 971-amino-acid chain; its full sequence is Oncostatin-M-specific receptor subunit beta (971 aa).

The first 23 residues, 1 to 23, serve as a signal peptide directing secretion; it reads MAFSVVLHPAFLLAVLSLRASRS. Over 24 to 737 the chain is Extracellular; that stretch reads EVLEEPLPLT…VTTPDARSHM (714 aa). N-linked (GlcNAc...) asparagine glycosylation is found at asparagine 74, asparagine 97, asparagine 130, asparagine 162, and asparagine 239. Cysteines 242 and 252 form a disulfide. Residues asparagine 271, asparagine 304, asparagine 323, and asparagine 377 are each glycosylated (N-linked (GlcNAc...) asparagine). 4 consecutive Fibronectin type-III domains span residues 332–425, 427–523, 524–620, and 622–733; these read APQD…TPET, PSQA…SNDS, GHEE…TQEL, and PLVN…TPDA. The WSXWS motif signature appears at 412–416; sequence WSDWT. N-linked (GlcNAc...) asparagine glycans are attached at residues asparagine 491, asparagine 541, asparagine 577, asparagine 689, and asparagine 722. The helical transmembrane segment at 738-758 threads the bilayer; it reads LLQIILPMTLCVLLSIIVCYW. Over 759-971 the chain is Cytoplasmic; the sequence is KSQWVKEKCY…STVLLGQGEQ (213 aa). The Box 1 motif motif lies at 767-775; the sequence is CYPDIPNPY. Positions 949-971 are disordered; the sequence is LASPSLKEDNSLTSTVLLGQGEQ. The span at 959-971 shows a compositional bias: polar residues; the sequence is SLTSTVLLGQGEQ.

Belongs to the type I cytokine receptor family. Type 2 subfamily. In terms of assembly, heterodimer composed of OSMR and IL6ST (type II OSM receptor). Heterodimer with IL31RA to form the IL31 receptor. In terms of tissue distribution, widely expressed. Expressed at highest levels in the lung, heart, thymus and spleen. Expressed in dorsal root ganglia.

It is found in the membrane. In terms of biological role, associates with IL31RA to form the IL31 receptor. Binds IL31 to activate STAT3 and possibly STAT1 and STAT5. Capable of transducing OSM-specific signaling events. The sequence is that of Oncostatin-M-specific receptor subunit beta (Osmr) from Mus musculus (Mouse).